A 175-amino-acid chain; its full sequence is R-phycoerythrin subunit beta (175 aa).

Cysteine 82 is a binding site for (2R,3E)-phycoerythrobilin.

This sequence belongs to the phycobiliprotein family. In terms of assembly, homodimer. Contains one covalently linked phycoerythrobilin chromophore.

In terms of biological role, green-light absorbing phycoerythrin of unknown function. The chain is R-phycoerythrin subunit beta (cpeB) from Prochlorococcus marinus subsp. pastoris (strain CCMP1986 / NIES-2087 / MED4).